We begin with the raw amino-acid sequence, 132 residues long: Small ribosomal subunit protein uS12 (132 aa).

The residue at position 89 (Asp89) is a 3-methylthioaspartic acid. Residues 106 to 132 (GVKDRKKSRSKYGTKKPKEAAKTAAKK) form a disordered region. A compositionally biased stretch (basic residues) spans 109–120 (DRKKSRSKYGTK).

This sequence belongs to the universal ribosomal protein uS12 family. As to quaternary structure, part of the 30S ribosomal subunit. Contacts proteins S8 and S17. May interact with IF1 in the 30S initiation complex.

In terms of biological role, with S4 and S5 plays an important role in translational accuracy. Interacts with and stabilizes bases of the 16S rRNA that are involved in tRNA selection in the A site and with the mRNA backbone. Located at the interface of the 30S and 50S subunits, it traverses the body of the 30S subunit contacting proteins on the other side and probably holding the rRNA structure together. The combined cluster of proteins S8, S12 and S17 appears to hold together the shoulder and platform of the 30S subunit. This is Small ribosomal subunit protein uS12 (rpsL) from Thermus thermophilus (strain ATCC BAA-163 / DSM 7039 / HB27).